The sequence spans 334 residues: MADASSRTDTSIVVDNDDKNHQLENGHSGAVMASNSSDRSDRSDKLMDQKTIRRLAQNREAARKSRLRKKAYVQQLESSKLKLAQLEQELQKARQQGIFISSSGDQTHAMSGNGALTFDLEYTRWLEEQNKQINELRTAVNAHASDSDLRLIVDGIMAHYDEVFKVKGVAAKADVFHILSGMWKTPAERCFLWLGGFRPSELLKLLANHLEPLTEQQLLGLNNLQESSQQAEDALSQGMEALQQSLADTLAGSLGSSGSSGNVANYMGQMAMAMGKLGTLENFLCQADNLRQQTLHQMQRILTIRQASRALLAIHDYFSRLRALSSLWLARPRE.

Residues 1 to 13 (MADASSRTDTSIV) are compositionally biased toward polar residues. A disordered region spans residues 1–49 (MADASSRTDTSIVVDNDDKNHQLENGHSGAVMASNSSDRSDRSDKLMDQ). A compositionally biased stretch (basic and acidic residues) spans 38 to 49 (DRSDRSDKLMDQ). The 45-residue stretch at 48–92 (DQKTIRRLAQNREAARKSRLRKKAYVQQLESSKLKLAQLEQELQK) folds into the bZIP domain. The tract at residues 50–70 (KTIRRLAQNREAARKSRLRKK) is basic motif. Residues 76–90 (LESSKLKLAQLEQEL) form a leucine-zipper region. Residues 115-331 (ALTFDLEYTR…RALSSLWLAR (217 aa)) enclose the DOG1 domain.

Belongs to the bZIP family. In terms of assembly, interacts with NPR1/NH1 and NPR3/NH3.

It is found in the nucleus. Functionally, plays a negative role in rice basal defense responses to the bacterial blight pathogen Xanthomomas oryzae pv. oryzae (Xoo). May function in both positive and negative regulation of rice defense genes. Binds DNA in vitro. Acts as a transcriptional activator when bound to NPR1/NH1 in vitro. Binds to the promoter sequence of CRK10 in vitro. This Oryza sativa subsp. japonica (Rice) protein is Transcription factor TGA2.1.